The sequence spans 868 residues: Rifampicin phosphotransferase (868 aa).

Positions 5–317 (TERYVLDLQE…FHIVQSRPIT (313 aa)) are ATP-binding. Residues lysine 26, arginine 120, glycine 135, threonine 139, glutamine 186, glutamate 300, glutamine 312, and arginine 314 each contribute to the ATP site. Positions 330–755 (NHVYVSVGHQ…TSDGEALTGA (426 aa)) are rifampicin-binding. Residues 410-430 (FVPSLPDAPPAGPRAGAAPEP) form a disordered region. Residues 768 to 866 (GLPVSTGTVE…VHGTDGYIEI (99 aa)) are swivel phosphohistidine. Histidine 826 (tele-phosphohistidine intermediate) is an active-site residue.

The protein belongs to the rifampicin phosphotransferase family.

It catalyses the reaction rifampicin + ATP + H2O = 21-phosphorifampicin + AMP + phosphate + 2 H(+). Catalyzes the phosphorylation of rifampicin, also known as rifampin (RIF), leading to its inactivation. Confers high level resistance to a variety of clinically used rifamycin antibiotics. Does not show phosphoenolpyruvate (PEP) synthase activity. The sequence is that of Rifampicin phosphotransferase from Streptomyces sviceus (strain ATCC 29083 / DSM 924 / JCM 4929 / NBRC 13980 / NCIMB 11184 / NRRL 5439 / UC 5370).